Consider the following 194-residue polypeptide: dATP triphosphohydrolase (194 aa).

DATP is bound at residue Arg-17. The Co(2+) site is built by His-32, His-71, Asp-72, Glu-75, Asp-80, and Asp-123.

It belongs to the Caudovirales dATP triphosphohydrolase family. The cofactor is Co(2+).

It carries out the reaction dATP + H2O = 2'-deoxyadenosine + triphosphate + H(+). The catalysed reaction is dADP + H2O = 2'-deoxyadenosine + diphosphate. It catalyses the reaction dAMP + H2O = 2'-deoxyadenosine + phosphate. Functionally, catalyzes the hydrolysis of dATP, dADP and dAMP into dA. This step is essential for Z-genome synthesis (containing aminoadenine instead of adenine). Specifically removes dATP and its precursor dADP from the nucleotide pool of the host, preventing the incorporation of A into the phage genome and favoring the integration of the Z-base into the viral genome. The sequence is that of dATP triphosphohydrolase (datZ) from Salmonella phage PMBT28.